The sequence spans 759 residues: MESVRIEQMLSLPAEVSSDNLESAERGASAAQVDMGPHPKVAAEGPAPLPTREPEQEQSPGTSTPESKVLLTQADALASRGRIREALEVYRQLSERQQLVAEQLEQLVRCLAEKVPQGEALAPAPPDEGSTASGTVAAEETGAAAAAAATEVWDGFKCRKCHGFLSDPVSLSCGHTFCKLCLERGRAADRRCALCGVKLSALMVATGRARGARRAGQQPPPPLRVNVVLSGLLGKLFPGPARASQLRHEGNRLYRERQVEAALLKYNEAVKLAPNDHLLYSNRSQIYFTLESHENALHDAEIACKLRPMGFKAHFRKAQALATLGKVEEALREFLYCVSLDGKNKRARCEAQRDNLELPHCSSQEEAAARGDGSSLMDPAKVKGDGQQHHMKDQEEEEEKWDATSPKAASSKTGKCQEKKRKHCQIESQEETGMPNKASKQDPPTDQGDKPALSLPLASFDASDLECALCMRLFYEPVTTPCGHTFCLKCLERCLDHNAKCPLCKDGLSQCLASRKYSKNVIMEELIAKFLPEELKERRKLYEEEMEELSNLNKNVPIFVCTMAYPTVPCPLHIFEPCYRLMIRRCIETGTRQFGMCLGDPVKGFAEYGCILEIRNVQFFADGRSVVDSIGKRRFRVLHQSQRDGYNTADIEYIEDQKVQGEDCAELMGLHNCVYQQASLWFHSLKLSLKNRILNHFGPMPEKDADPQMNPNGPAWCWWMLAVLPLESRAQLPFLAMRSLKDRLNGIRRVLAFISRNQN.

Positions 1–69 (MESVRIEQML…PGTSTPESKV (69 aa)) are disordered. The span at 57–66 (EQSPGTSTPE) shows a compositional bias: polar residues. A TPR 1 repeat occupies 67–100 (SKVLLTQADALASRGRIREALEVYRQLSERQQLV). An RING-type 1 zinc finger spans residues 158 to 196 (CRKCHGFLSDPVSLSCGHTFCKLCLERGRAADRRCALCG). TPR repeat units follow at residues 243–276 (ASQLRHEGNRLYRERQVEAALLKYNEAVKLAPND), 278–310 (LLYSNRSQIYFTLESHENALHDAEIACKLRPMG), and 312–344 (KAHFRKAQALATLGKVEEALREFLYCVSLDGKN). The segment at 360 to 454 (HCSSQEEAAA…TDQGDKPALS (95 aa)) is disordered. Over residues 380 to 393 (AKVKGDGQQHHMKD) the composition is skewed to basic and acidic residues. An RING-type 2 zinc finger spans residues 467 to 505 (CALCMRLFYEPVTTPCGHTFCLKCLERCLDHNAKCPLCK). Positions 546-755 (MEELSNLNKN…GIRRVLAFIS (210 aa)) constitute a Lon N-terminal domain.

In Homo sapiens (Human), this protein is LON peptidase N-terminal domain and RING finger protein 3 (LONRF3).